A 261-amino-acid polypeptide reads, in one-letter code: Transmembrane protein 106A (261 aa).

Residues 1 to 10 (MGKAFSQLTS) are compositionally biased toward polar residues. The disordered stretch occupies residues 1 to 22 (MGKAFSQLTSQKDEDKSILPDN). The helical transmembrane segment at 93-113 (LSVFLAVTICLLIFSLTIFFL) threads the bilayer.

This sequence belongs to the TMEM106 family.

The protein resides in the cell membrane. Activates macrophages and polarizes them into M1-like macrophages through the activation of the MAPK and NF-kappaB signaling pathway. Upon activation, up-regulates the expression of CD80, CD86, CD69 and MHC II on macrophages, and induces the release of pro-inflammatory cytokines such as TNF, IL1B, IL6, CCL2 and nitric oxide. May play a role in inhibition of proliferation and migration. The chain is Transmembrane protein 106A (Tmem106a) from Rattus norvegicus (Rat).